The chain runs to 235 residues: Ribonuclease PH (235 aa).

Residues arginine 86 and 124-126 contribute to the phosphate site; that span reads GTR.

It belongs to the RNase PH family. As to quaternary structure, homohexameric ring arranged as a trimer of dimers.

The catalysed reaction is tRNA(n+1) + phosphate = tRNA(n) + a ribonucleoside 5'-diphosphate. Functionally, phosphorolytic 3'-5' exoribonuclease that plays an important role in tRNA 3'-end maturation. Removes nucleotide residues following the 3'-CCA terminus of tRNAs; can also add nucleotides to the ends of RNA molecules by using nucleoside diphosphates as substrates, but this may not be physiologically important. Probably plays a role in initiation of 16S rRNA degradation (leading to ribosome degradation) during starvation. In Francisella tularensis subsp. holarctica (strain FTNF002-00 / FTA), this protein is Ribonuclease PH.